Consider the following 433-residue polypeptide: Serine/threonine-protein kinase Sgk1 (433 aa).

Residues 66–92 (QDVELMNSNPSPPPSPSQQINLGPSSN) are disordered. Positions 83 to 92 (QQINLGPSSN) are enriched in polar residues. The Protein kinase domain occupies 100 to 357 (FDFLKVIGKG…FTEIKNHMFF (258 aa)). Residues 106-114 (IGKGSFGKV) and K129 contribute to the ATP site. D224 functions as the Proton acceptor in the catalytic mechanism. An AGC-kinase C-terminal domain is found at 358–433 (SPINWDDLNA…SYAPAMDSYL (76 aa)).

This sequence belongs to the protein kinase superfamily. AGC Ser/Thr protein kinase family.

It is found in the cytoplasm. The protein localises to the nucleus. The protein resides in the endoplasmic reticulum. It catalyses the reaction L-seryl-[protein] + ATP = O-phospho-L-seryl-[protein] + ADP + H(+). It carries out the reaction L-threonyl-[protein] + ATP = O-phospho-L-threonyl-[protein] + ADP + H(+). Its function is as follows. Protein kinase that may play an important role in cellular stress response. May be involved in the regulation of processes such as cell survival, neuronal excitability and renal sodium excretion. The sequence is that of Serine/threonine-protein kinase Sgk1 (sgk1) from Danio rerio (Zebrafish).